The chain runs to 337 residues: MAAGAAEAGEAAVAVVEVGSAQQFEELLRLKTKSLLVVHFWAPWAPQCVQMNDVMAELAKEHPHVSFVKLEAEAVPEVSEKYEISSVPTFLFFKNSQKVDRLDGAHAPELTKKVQRHVSSGAFPPSTNEHLKEDLSLRLKKLTHAAPCMLFMKGTPQEPRCGFSKQMVEILHKHNIQFSSFDIFSDEEVRQGLKTYSNWPTYPQLYVSGELIGGLDIIKELEASEELDTICPKAPKLEERLKVLTNKASVMLFMKGNKQEAKCGFSKQILEILNSTGVEYETFDILEDEEVRQGLKTFSNWPTYPQLYVRGDLVGGLDIVKELKDNGELLPILKGEN.

N-acetylalanine is present on A2. Positions 2–119 (AAGAAEAGEA…LTKKVQRHVS (118 aa)) constitute a Thioredoxin domain. Phosphoserine is present on S119. 2 consecutive Glutaredoxin domains span residues 144 to 238 (HAAP…PKLE) and 239 to 337 (ERLK…KGEN). [2Fe-2S] cluster is bound by residues C161 and C263.

As to quaternary structure, homodimer; the homodimer is independent of 2Fe-2S clusters. Heterotrimer; forms a heterotrimeric complex composed by two BOLA2 molecules and one GLRX3 molecule; linked by [2Fe-2S] clusters. Interacts (via N-terminus) with PRKCQ/PKC-theta. Interacts (via C-terminus) with CSRP3. Interacts with CSRP2.

The protein resides in the cytoplasm. It is found in the cytosol. It localises to the cell cortex. Its subcellular location is the myofibril. The protein localises to the sarcomere. The protein resides in the z line. Together with BOLA2, acts as a cytosolic iron-sulfur (Fe-S) cluster assembly factor that facilitates [2Fe-2S] cluster insertion into a subset of cytosolic proteins. Acts as a critical negative regulator of cardiac hypertrophy and a positive inotropic regulator. Required for hemoglobin maturation. Does not possess any thyoredoxin activity since it lacks the conserved motif that is essential for catalytic activity. The sequence is that of Glutaredoxin-3 (Glrx3) from Mus musculus (Mouse).